The sequence spans 237 residues: Protein PetR (237 aa).

The Response regulatory domain occupies 8 to 121 (HLLIVDDDER…ELLLRINAIL (114 aa)). The residue at position 57 (D57) is a 4-aspartylphosphate. Positions 77–95 (ATPILLLTARGETRERIEG) form a DNA-binding region, H-T-H motif. The segment at residues 132–236 (PKYLSLGPLR…VRGLGYMLAP (105 aa)) is a DNA-binding region (ompR/PhoB-type).

Functionally, necessary for photosynthetic and respiratory growth. Probable promoter-specific protein mediating the interaction between DNA and RNA polymerase. The chain is Protein PetR (petR) from Rhodobacter capsulatus (strain ATCC BAA-309 / NBRC 16581 / SB1003).